The sequence spans 30 residues: Gamma-II crystallin (30 aa).

One can recognise a Beta/gamma crystallin 'Greek key' domain in the interval 1-30 (GKITFYEDRNFQGRCYECSTDCPDLSPYFS).

Belongs to the beta/gamma-crystallin family. As to quaternary structure, monomer.

In terms of biological role, crystallins are the dominant structural components of the vertebrate eye lens. The protein is Gamma-II crystallin of Rhizoprionodon acutus (Milk shark).